We begin with the raw amino-acid sequence, 365 residues long: Protein RecA (365 aa).

Position 73 to 80 (73 to 80 (GPESSGKT)) interacts with ATP.

This sequence belongs to the RecA family.

The protein localises to the cytoplasm. Functionally, can catalyze the hydrolysis of ATP in the presence of single-stranded DNA, the ATP-dependent uptake of single-stranded DNA by duplex DNA, and the ATP-dependent hybridization of homologous single-stranded DNAs. It interacts with LexA causing its activation and leading to its autocatalytic cleavage. The polypeptide is Protein RecA (Prochlorococcus marinus (strain AS9601)).